The sequence spans 176 residues: NAD(P)H-quinone oxidoreductase subunit 6, chloroplastic (176 aa).

Helical transmembrane passes span 10–30, 32–52, 61–81, 95–115, and 152–172; these read FILVFLGLVLILGGLAVVLLP, PIYSAFSLGLVLVCISLLYIL, AQLLIYVGAINVLIIFAVMFL, VGDGVTSVVCTSLFASLITTI, and FLIPFELISIILLVALIGAIA.

Belongs to the complex I subunit 6 family. In terms of assembly, NDH is composed of at least 16 different subunits, 5 of which are encoded in the nucleus.

The protein localises to the plastid. It localises to the chloroplast thylakoid membrane. The catalysed reaction is a plastoquinone + NADH + (n+1) H(+)(in) = a plastoquinol + NAD(+) + n H(+)(out). It catalyses the reaction a plastoquinone + NADPH + (n+1) H(+)(in) = a plastoquinol + NADP(+) + n H(+)(out). Functionally, NDH shuttles electrons from NAD(P)H:plastoquinone, via FMN and iron-sulfur (Fe-S) centers, to quinones in the photosynthetic chain and possibly in a chloroplast respiratory chain. The immediate electron acceptor for the enzyme in this species is believed to be plastoquinone. Couples the redox reaction to proton translocation, and thus conserves the redox energy in a proton gradient. In Trachelium caeruleum (Blue throatwort), this protein is NAD(P)H-quinone oxidoreductase subunit 6, chloroplastic (ndhG).